A 263-amino-acid chain; its full sequence is Mannose-specific lectin 2 (263 aa).

Positions Met-1 to Ala-24 are cleaved as a signal peptide. Bulb-type lectin domains lie at Asn-26–Arg-136 and Arg-150–Ser-260. Disulfide bonds link Cys-54-Cys-76 and Cys-178-Cys-203.

As to quaternary structure, heterotetramer of 2 domain 1 and 2 domain 2 chains arranged as a dimer of domain 1/domain 2 heterodimers.

Functionally, mannose-specific lectin. Has weak agglutinating activity towards trypsin-treated erythrocytes from rabbit but not from human. This Crocus vernus (Dutch crocus) protein is Mannose-specific lectin 2.